The primary structure comprises 284 residues: Polyamine aminopropyltransferase (284 aa).

The PABS domain occupies 2-237; it reads ELWYTEEQTQ…GYWLFGFASK (236 aa). Gln31 serves as a coordination point for S-methyl-5'-thioadenosine. Positions 62 and 86 each coordinate spermidine. Residues Glu106 and 137-138 contribute to the S-methyl-5'-thioadenosine site; that span reads DG. Asp155 serves as the catalytic Proton acceptor. 155 to 158 serves as a coordination point for spermidine; sequence DSTD. An S-methyl-5'-thioadenosine-binding site is contributed by Pro162.

The protein belongs to the spermidine/spermine synthase family. Homodimer or homotetramer.

It localises to the cytoplasm. The catalysed reaction is S-adenosyl 3-(methylsulfanyl)propylamine + putrescine = S-methyl-5'-thioadenosine + spermidine + H(+). It functions in the pathway amine and polyamine biosynthesis; spermidine biosynthesis; spermidine from putrescine: step 1/1. Functionally, catalyzes the irreversible transfer of a propylamine group from the amino donor S-adenosylmethioninamine (decarboxy-AdoMet) to putrescine (1,4-diaminobutane) to yield spermidine. The polypeptide is Polyamine aminopropyltransferase (Alkaliphilus metalliredigens (strain QYMF)).